Here is a 129-residue protein sequence, read N- to C-terminus: MARPKRTVKKKEKKNVPVGIVHIQATFNNTIVTFTDTRGNTISWASAGQSGFKGSRKSTPFAAQVAAEQAAKRAQDHGMRTVGIYVKGPGSGREAAMRAVNAAGFKVAFIRDITPIPHNGCRPPKRRRV.

This sequence belongs to the universal ribosomal protein uS11 family. In terms of assembly, part of the 30S ribosomal subunit. Interacts with proteins S7 and S18. Binds to IF-3.

Located on the platform of the 30S subunit, it bridges several disparate RNA helices of the 16S rRNA. Forms part of the Shine-Dalgarno cleft in the 70S ribosome. The polypeptide is Small ribosomal subunit protein uS11 (Nitratidesulfovibrio vulgaris (strain DSM 19637 / Miyazaki F) (Desulfovibrio vulgaris)).